We begin with the raw amino-acid sequence, 232 residues long: MAGRATATATAAGKDRSSFAVTCSLLSQFLKEKKGGGGGLQGLGLGLRPAPAAPPAAGAGGAFRPPPTTMNLLSGLDAPAVEVEPNTAETAADELPLIKAPADQQSDESASEAAGEKAQQLTIFYGGKVVVFENFPSTKVKDLLQIVSTGDGVDKNTGTAATQSLPRPAHNSLPDLPIARRNSLHRFLEKRKGRMNANAPYQANCTAAPSKQANGDKSWLGFGQEMTIKQEI.

Residues Pro-54–Leu-73 are disordered. The region spanning Ala-114 to Thr-149 is the Tify domain. Positions Gly-152–Pro-177 are disordered. The span at Asn-156–Leu-165 shows a compositional bias: polar residues. Residues Pro-177–Gln-202 carry the Jas motif. Positions Ala-179–Arg-186 match the Nuclear localization signal motif.

This sequence belongs to the TIFY/JAZ family. In terms of assembly, interacts with BHLH148. Interacts with COI1B in a coronatine-dependent manner. Coronatine is an analog of jasmonoyl isoleucine (JA-Ile). Interacts with TIFY5/JAZ2, TIFY6B/JAZ4, TIFY9/JAZ5, TIFY11A, TIFY11D/JAZ12, TIFY11G/JAZ15 and NINJA1. Post-translationally, ubiquitinated. Increase in jasmonoyl isoleucine (JA-Ile) levels mediates its degradation via COI1B-mediated proteasome pathway.

The protein resides in the nucleus. It is found in the cytoplasm. The protein localises to the cytosol. Its function is as follows. Repressor of jasmonate (JA) responses. Acts as a repressor of JA-induced resistance to the bacterial blight pathogen Xanthomonas oryzae pv. oryzae (Xoo). Regulates JA-induced accumulation of linalool at the transcriptional level of linalool synthase gene LIS. Linalool is important for resistance to bacterial blight pathogen Xoo. This is Protein TIFY 10c from Oryza sativa subsp. japonica (Rice).